The sequence spans 445 residues: Phosphoglucosamine mutase (445 aa).

Residue Ser102 is the Phosphoserine intermediate of the active site. The Mg(2+) site is built by Ser102, Asp241, Asp243, and Asp245. Ser102 bears the Phosphoserine mark.

This sequence belongs to the phosphohexose mutase family. The cofactor is Mg(2+). In terms of processing, activated by phosphorylation.

It carries out the reaction alpha-D-glucosamine 1-phosphate = D-glucosamine 6-phosphate. In terms of biological role, catalyzes the conversion of glucosamine-6-phosphate to glucosamine-1-phosphate. This chain is Phosphoglucosamine mutase, found in Aliivibrio salmonicida (strain LFI1238) (Vibrio salmonicida (strain LFI1238)).